The chain runs to 300 residues: B1 kinase (300 aa).

One can recognise a Protein kinase domain in the interval 16–282 (WVVGPLIGKG…ITMVNSLTYF (267 aa)). Residues 22-30 (IGKGGFGSI) and Lys-45 contribute to the ATP site. The Proton acceptor role is filled by Asn-147.

This sequence belongs to the protein kinase superfamily. Ser/Thr protein kinase family. Poxviruses subfamily. In terms of assembly, interacts with host JIP1; this interaction increases the amount of MAPK bound to JIP1 and subsequently increases the activity of transcription factors, such as JUN, that respond to these complexes. Interacts with protein OPG198; this interaction inhibits the repressive activity of OPG198 pseudokinase on viral replication factory formation. The cofactor is Mg(2+). In terms of processing, autophosphorylated.

It localises to the virion. The protein resides in the host cytoplasm. It catalyses the reaction L-seryl-[protein] + ATP = O-phospho-L-seryl-[protein] + ADP + H(+). The catalysed reaction is L-threonyl-[protein] + ATP = O-phospho-L-threonyl-[protein] + ADP + H(+). In terms of biological role, essential serine/threonine-protein kinase that plays different role in the viral life cycle. Phosphorylates the host small ribosomal protein RACK1 thereby customizing the ribosomes to a state optimal for viral mRNAs (which contain poly-A leaders) but not for host mRNAs. Facilitates viral DNA replication by inhibiting host BANF1, a cellular host defense responsive to foreign DNA. Phosphorylates host BANF1 on serine and threonine residues; this leads to BANF1 relocalization to the cytoplasm, loss of dimerization and impaired DNA binding activity. Indeed, BANF1 activity depends on its DNA-binding property which is blocked by VPK1-mediated phosphorylation. Required for viral intermediate genes expression, probably by inhibiting host BANF1. Modulates cellular responses via host JUN by two different mechanisms, either by direct phosphorylation or by modulation of upstream JIP1-MAPK complexes. Seems to participate in the accumulation/processing of late proteins and thus in virion maturation. In addition, inhibits B12 repressive activity on viral DNA replication via a phosphorylation-dependent mechanism. The polypeptide is B1 kinase (OPG187) (Homo sapiens (Human)).